We begin with the raw amino-acid sequence, 350 residues long: Type II restriction enzyme NgoBI (350 aa).

It catalyses the reaction Endonucleolytic cleavage of DNA to give specific double-stranded fragments with terminal 5'-phosphates.. A P subtype restriction enzyme that recognizes the double-stranded sequence 5'-RGCGCY-3'; the cleavage site is unknown. The sequence is that of Type II restriction enzyme NgoBI (ngoBIR) from Neisseria gonorrhoeae.